The sequence spans 232 residues: GTP cyclohydrolase 1 (232 aa).

The tract at residues 1–24 (MSDNLKSYQDNHIENEDEEIYERS) is disordered. Positions 121, 124, and 192 each coordinate Zn(2+).

This sequence belongs to the GTP cyclohydrolase I family. In terms of assembly, toroid-shaped homodecamer, composed of two pentamers of five dimers.

The enzyme catalyses GTP + H2O = 7,8-dihydroneopterin 3'-triphosphate + formate + H(+). It functions in the pathway cofactor biosynthesis; 7,8-dihydroneopterin triphosphate biosynthesis; 7,8-dihydroneopterin triphosphate from GTP: step 1/1. Its function is as follows. First enzyme in the biosynthesis of tetrahydrobiopterin (BH4). Catalyzes the conversion of GTP into dihydroneopterin triphosphate (7,8-dihydroneopterin 3'-triphosphate), which is subsequently catalyzed by 6-pyruvoyltetrahydropterin synthase (ptsA) and sepiapterin reductase (sprA). This chain is GTP cyclohydrolase 1 (gchA), found in Dictyostelium discoideum (Social amoeba).